A 37-amino-acid polypeptide reads, in one-letter code: Large ribosomal subunit protein bL36 (37 aa).

This sequence belongs to the bacterial ribosomal protein bL36 family.

The sequence is that of Large ribosomal subunit protein bL36 from Koribacter versatilis (strain Ellin345).